The primary structure comprises 61 residues: Small ribosomal subunit protein eS31 (61 aa).

Zn(2+) contacts are provided by C22, C25, C38, and C41. The C4-type zinc-finger motif lies at 22 to 41 (CPRCGSFMAEHKDRYHCGKC).

The protein belongs to the eukaryotic ribosomal protein eS31 family. In terms of assembly, part of the 30S ribosomal subunit. The cofactor is Zn(2+).

The chain is Small ribosomal subunit protein eS31 from Nanoarchaeum equitans (strain Kin4-M).